We begin with the raw amino-acid sequence, 482 residues long: Nucleoside triphosphate pyrophosphatase/Nudix hydrolase fusion protein (482 aa).

Residues 1–299 (MSIPLILASK…DLWNVGRGEL (299 aa)) are maf-like. Aspartate 167 serves as the catalytic Proton acceptor. Residues 338–475 (GTNGASGILL…TDWPRFAARL (138 aa)) enclose the Nudix hydrolase domain.

The protein in the N-terminal section; belongs to the Maf family. The cofactor is a divalent metal cation.

It localises to the cytoplasm. The enzyme catalyses a ribonucleoside 5'-triphosphate + H2O = a ribonucleoside 5'-phosphate + diphosphate + H(+). It carries out the reaction a 2'-deoxyribonucleoside 5'-triphosphate + H2O = a 2'-deoxyribonucleoside 5'-phosphate + diphosphate + H(+). Its function is as follows. Nucleoside triphosphate pyrophosphatase. May have a dual role in cell division arrest and in preventing the incorporation of modified nucleotides into cellular nucleic acids. The chain is Nucleoside triphosphate pyrophosphatase/Nudix hydrolase fusion protein from Bifidobacterium longum (strain NCC 2705).